Here is an 817-residue protein sequence, read N- to C-terminus: DNA ligase (817 aa).

Residues 45–49 (DVEYD), 94–95 (SI), and E131 contribute to the NAD(+) site. The active-site N6-AMP-lysine intermediate is K133. NAD(+) contacts are provided by R154, E193, K311, and K335. Zn(2+) contacts are provided by C444, C447, C462, and C468. The BRCT domain occupies 733-817 (AEEGVLDGKT…LLKKPAGDQA (85 aa)).

This sequence belongs to the NAD-dependent DNA ligase family. LigA subfamily. The cofactor is Mg(2+). Mn(2+) is required as a cofactor.

It catalyses the reaction NAD(+) + (deoxyribonucleotide)n-3'-hydroxyl + 5'-phospho-(deoxyribonucleotide)m = (deoxyribonucleotide)n+m + AMP + beta-nicotinamide D-nucleotide.. Functionally, DNA ligase that catalyzes the formation of phosphodiester linkages between 5'-phosphoryl and 3'-hydroxyl groups in double-stranded DNA using NAD as a coenzyme and as the energy source for the reaction. It is essential for DNA replication and repair of damaged DNA. This is DNA ligase from Ralstonia pickettii (strain 12J).